The following is a 484-amino-acid chain: MLITKNQAEKWFDNSLGKQFNPDLFYGFQCYDYANMFFMIATGERLQGLYAYNIPFDNKARIEKYGQIIKNYDSFLPQKLDIVVFPSKYGGGAGHVEIVESANLNTFTSFGQNWNGKGWTNGVAQPGWGPETVTRHVHYYDDPMYFIRLNFPDKVSVGDKAKSVIKQATAKKQAVIKPKKIMLVAGHGYNDPGAVGNGTNERDFIRKYITPNIAKYLRHAGHEVALYGGSSQSQDMYQDTAYGVNVGNNKDYGLYWVKSHGYDIVLEIHLDAAGESASGGHVIISSQFNADTIDKSIQDVIKNNLGQIRGVTPRNDLLNVNVSAEININYRLSELGFITNKNDMDWIKKNYDLYSKLIAGAIHGKPIGGLVAGNVKTSAKNQKNPPVPAGYTLDKNNVPYKKETGYYTVANVKGNNVRDGYSTNSRITGVLPNNATIKYDGAYCINGYRWITYIANSGQRRYIATGEVDKAGNRISSFGKFSTI.

One can recognise a Peptidase C51 domain in the interval 5–148; the sequence is KNQAEKWFDN…YYDDPMYFIR (144 aa). The region spanning 181-363 is the MurNAc-LAA domain; it reads IMLVAGHGYN…YSKLIAGAIH (183 aa). Positions 402–472 constitute an SH3b domain; sequence KETGYYTVAN…IATGEVDKAG (71 aa).

It catalyses the reaction Hydrolyzes the link between N-acetylmuramoyl residues and L-amino acid residues in certain cell-wall glycopeptides.. Functionally, has weak lytic activity toward S.aureus cells. Full-length protein has no activity, but fusion of the Peptidase C51 domain to the lysostaphin SH3 cell wall binding domain yields an active chimeric enzyme, suggesting that PH may be functional. The polypeptide is Probable autolysin PH (Staphylococcus aureus (strain NCTC 8325 / PS 47)).